The following is a 136-amino-acid chain: Interleukin-13 (136 aa).

The first 18 residues, methionine 1–alanine 18, serve as a signal peptide directing secretion. 6 N-linked (GlcNAc...) asparagine glycosylation sites follow: asparagine 38, asparagine 49, asparagine 57, asparagine 72, asparagine 75, and asparagine 131. Disulfide bonds link cysteine 48/cysteine 76 and cysteine 64/cysteine 90.

The protein belongs to the IL-4/IL-13 family. Interacts with IL13RA2.

It is found in the secreted. Cytokine that plays important roles in allergic inflammation and immune response to parasite infection. Synergizes with IL2 in regulating interferon-gamma synthesis. Stimulates B-cell proliferation, and activation of eosinophils, basophils, and mast cells. Plays an important role in controlling IL33 activity by modulating the production of transmembrane and soluble forms of interleukin-1 receptor-like 1/IL1RL1. Displays the capacity to antagonize Th1-driven proinflammatory immune response and downregulates synthesis of many proinflammatory cytokines including IL1, IL6, IL10, IL12 and TNF-alpha through a mechanism that partially involves suppression of NF-kappa-B. Also functions on nonhematopoietic cells, including endothelial cells where it induces vascular cell adhesion protein 1/VCAM1, which is important in the recruitment of eosinophils. Exerts its biological effects through its receptors which comprises the IL4R chain and the IL13RA1 chain, to activate JAK1 and TYK2, leading to the activation of STAT6. Aside from IL13RA1, another receptor IL13RA2 acts as a high affinity decoy for IL13 and mediates internalization and depletion of extracellular IL13. The sequence is that of Interleukin-13 (IL13) from Camelus bactrianus (Bactrian camel).